A 135-amino-acid chain; its full sequence is Flagellar assembly factor FliW 2 (135 aa).

It belongs to the FliW family. As to quaternary structure, interacts with translational regulator CsrA and flagellin(s).

Its subcellular location is the cytoplasm. Acts as an anti-CsrA protein, binds CsrA and prevents it from repressing translation of its target genes, one of which is flagellin. Binds to flagellin and participates in the assembly of the flagellum. This chain is Flagellar assembly factor FliW 2, found in Helicobacter acinonychis (strain Sheeba).